The chain runs to 306 residues: MPSNGDLDRQIEQLMECKPLSEADVRTLCDQARAILVEEYNVQPVKCPVTVCGDIHGQFYDLIELFRIGGNAPDTNYLFMGDYVDRGYYSVETVSLLVALKVRYRDRLTILRGNHESRQITQVYGFYDECLRKYGNANVWKYFTDLFDYLPLTALIESQVFCLHGGLSPSLDTLDNIRSLDRIQEVPHEGPMCDLLWSDPDDRCGWGISPRGAGYTFGQDIAAQFNHNNGLSLISRAHQLVMEGFNWCQDKNVVTVFSAPNYCYRCGNMAAILEIGENMEQNFLQFDPAPRQVEPDTTRKTPDYFL.

Mn(2+)-binding residues include aspartate 54, histidine 56, aspartate 82, and asparagine 114. Histidine 115 serves as the catalytic Proton donor. Histidine 164 and histidine 238 together coordinate Mn(2+). The residue at position 306 (leucine 306) is a Leucine methyl ester.

It belongs to the PPP phosphatase family. PP-2A subfamily. As to quaternary structure, PP2A consists of a common heterodimeric core enzyme, composed of a 36 kDa catalytic subunit (subunit C) and a 65 kDa constant regulatory subunit (subunit A), that associates with a variety of regulatory subunits such as subunits B (the R2/B/PR55/B55, R3/B''/PR72/PR130/PR59 and R5/B'/B56 families). Interacts with B'THETA. Interacts with HDA14. Interacts with SRK2E/OST1. Interacts with TAP46. Mn(2+) serves as cofactor. Reversibly methyl esterified on Leu-306 by leucine carboxyl methyltransferase 1 (LCMT1) and pectin methylesterase 1 (PME1). Carboxyl methylation influences the affinity of the catalytic subunit for the different regulatory subunits, thereby modulating the PP2A holoenzyme's substrate specificity, enzyme activity and cellular localization. In terms of processing, phosphorylation of either threonine (by autophosphorylation-activated protein kinase) or tyrosine results in inactivation of the phosphatase. Auto-dephosphorylation has been suggested as a mechanism for reactivation. As to expression, expressed in root meristem, emerging lateral roots, leaf vasculature, stipules, guard cells, anthers and pollen grains.

The protein resides in the cytoplasm. The protein localises to the cytosol. It is found in the nucleus. It localises to the peroxisome. The catalysed reaction is O-phospho-L-seryl-[protein] + H2O = L-seryl-[protein] + phosphate. The enzyme catalyses O-phospho-L-threonyl-[protein] + H2O = L-threonyl-[protein] + phosphate. Functionally, dephosphorylates and activates the actin-depolymerizing factor ADF1, which, in turn, regulates actin cytoskeleton remodeling and is involved in the blue light photoreceptor PHOT2-mediated chloroplast avoidance movements. Associates with the serine/threonine-protein phosphatase PP2A regulatory subunits A and B' to positively regulates beta-oxidation of fatty acids and protoauxins in peroxisomes by dephosphorylating peroxisomal beta-oxidation-related proteins. Acts as a negative regulator of abscisic acid (ABA) signaling. May regulate ABA-dependent gene expression. Involved in the light-dependent activation of nitrate reductase. This Arabidopsis thaliana (Mouse-ear cress) protein is Serine/threonine-protein phosphatase PP2A-2 catalytic subunit.